A 1163-amino-acid chain; its full sequence is MEDIDQSSLVSSSTDSPPRPPPAFKYQFVTEPEDEEDEEEEEDEEEDDEDLEELEVLERKPAAGLSAAAVPPAAAAPLLDFSSDSVPPAPRGPLPAAPPAAPERQPSWERSPAAPAPSLPPAAAVLPSKLPEDDEPPARPPPPPPAGASPLAEPAAPPSTPAAPKRRGSGSVDETLFALPAASEPVIPSSAEKIMDLMEQPGNTVSSGQEDFPSVLLETAASLPSLSPLSTVSFKEHGYLGNLSAVSSSEGTIEETLNEASKELPERATNPFVNRDLAEFSELEYSEMGSSFKGSPKGESAILVENTKEEVIVRSKDKEDLVCSAALHSPQESPVGKEDRVVSPEKTMDIFNEMQMSVVAPVREEYADFKPFEQAWEVKDTYEGSRDVLAARANVESKVDRKCLEDSLEQKSLGKDSEGRNEDASFPSTPEPVKDSSRAYITCASFTSATESTTANTFPLLEDHTSENKTDEKKIEERKAQIITEKTSPKTSNPFLVAVQDSEADYVTTDTLSKVTEAAVSNMPEGLTPDLVQEACESELNEATGTKIAYETKVDLVQTSEAIQESLYPTAQLCPSFEEAEATPSPVLPDIVMEAPLNSLLPSAGASVVQPSVSPLEAPPPVSYDSIKLEPENPPPYEEAMNVALKALGTKEGIKEPESFNAAVQETEAPYISIACDLIKETKLSTEPSPDFSNYSEIAKFEKSVPEHAELVEDSSPESEPVDLFSDDSIPEVPQTQEEAVMLMKESLTEVSETVAQHKEERLSASPQELGKPYLESFQPNLHSTKDAASNDIPTLTKKEKISLQMEEFNTAIYSNDDLLSSKEDKIKESETFSDSSPIEIIDEFPTFVSAKDDSPKLAKEYTDLEVSDKSEIANIQSGADSLPCLELPCDLSFKNIYPKDEVHVSDEFSENRSSVSKASISPSNVSALEPQTEMGSIVKSKSLTKEAEKKLPSDTEKEDRSLSAVLSAELSKTSVVDLLYWRDIKKTGVVFGASLFLLLSLTVFSIVSVTAYIALALLSVTISFRIYKGVIQAIQKSDEGHPFRAYLESEVAISEELVQKYSNSALGHVNSTIKELRRLFLVDDLVDSLKFAVLMWVFTYVGALFNGLTLLILALISLFSIPVIYERHQVQIDHYLGLANKSVKDAMAKIQAKIPGLKRKAD.

Residue Met1 is modified to N-acetylmethionine. 2 disordered regions span residues 1-184 (MEDI…AASE) and 244-270 (SAVS…RATN). At 1-989 (MEDIDQSSLV…LYWRDIKKTG (989 aa)) the chain is on the cytoplasmic side. Phosphoserine is present on residues Ser7 and Ser16. The segment covering 7–16 (SSLVSSSTDS) has biased composition (low complexity). Residues 31-55 (EPEDEEDEEEEEDEEEDDEDLEELE) are compositionally biased toward acidic residues. A compositionally biased stretch (low complexity) spans 62-79 (AAGLSAAAVPPAAAAPLL). Residues 87–101 (PPAPRGPLPAAPPAA) are compositionally biased toward pro residues. Phosphoserine is present on Ser107. Residues 138–147 (ARPPPPPPAG) are compositionally biased toward pro residues. Residues Ser149, Ser169, and Ser171 each carry the phosphoserine modification. Phosphoserine occurs at positions 329, 333, and 343. At Thr347 the chain carries Phosphothreonine. Basic and acidic residues predominate over residues 406-423 (DSLEQKSLGKDSEGRNED). Disordered stretches follow at residues 406–437 (DSLE…KDSS) and 454–474 (TANT…DEKK). Ser425 is subject to Phosphoserine. A Phosphothreonine modification is found at Thr429. Over residues 461–474 (LEDHTSENKTDEKK) the composition is skewed to basic and acidic residues. Phosphoserine occurs at positions 488, 689, 726, 766, and 830. Thr832 carries the post-translational modification Phosphothreonine. Phosphoserine is present on residues Ser855, Ser922, and Ser962. Positions 976-1163 (VVDLLYWRDI…KIPGLKRKAD (188 aa)) constitute a Reticulon domain. A helical membrane pass occupies residues 990–1010 (VVFGASLFLLLSLTVFSIVSV). The Lumenal portion of the chain corresponds to 1011–1104 (TAYIALALLS…LMWVFTYVGA (94 aa)). Position 1075 is an N6-acetyllysine (Lys1075). The chain crosses the membrane as a helical span at residues 1105 to 1125 (LFNGLTLLILALISLFSIPVI). At 1126 to 1163 (YERHQVQIDHYLGLANKSVKDAMAKIQAKIPGLKRKAD) the chain is on the cytoplasmic side.

As to quaternary structure, binds to RTN4R. Interacts with ATL1. Interacts with TMEM170A. Interacts with RTN4IP1. In terms of assembly, interacts in trans with CNTNAP1. Interacts with REEP5. Interacts with synaptic plasticity regulator PANTS; the interaction results in enhanced RTN4-mediated inhibition of AMPA receptor clustering. Interacts with GPR50. Homodimer. Interacts with BAD/Bcl-xl and BCL2. Interact with RTN3. Interacts with NGBR. Interacts with SPTLC1. Interacts with GRAMD4. Interacts with CDH5. Interacts with BACE1 and BACE2. Interacts with REEP5. Interacts with RETREG3. As to quaternary structure, interacts with BACE1 and BACE2. Interacts with TMEM33. In terms of tissue distribution, isoforms A, B and C are present in optic nerve, spinal cord and cerebral cortex. Isoforms A and B are present in dorsal root ganglion, sciatic nerve and PC12 cells after longer exposure. Isoforms B and C are detected in kidney, cartilage, skin, lung and spleen. Isoform C is expressed at high level in skeletal muscle. In adult animals isoform A is expressed mainly in the nervous system.

The protein resides in the endoplasmic reticulum membrane. The protein localises to the cell membrane. It localises to the synapse. It is found in the cell junction. Functionally, required to induce the formation and stabilization of endoplasmic reticulum (ER) tubules. They regulate membrane morphogenesis in the ER by promoting tubular ER production. They influence nuclear envelope expansion, nuclear pore complex formation and proper localization of inner nuclear membrane proteins. However each isoform have specific functions mainly depending on their tissue expression specificities. In terms of biological role, developmental neurite growth regulatory factor with a role as a negative regulator of axon-axon adhesion and growth, and as a facilitator of neurite branching. Regulates neurite fasciculation, branching and extension in the developing nervous system. Involved in down-regulation of growth, stabilization of wiring and restriction of plasticity in the adult CNS. Regulates the radial migration of cortical neurons via an RTN4R-LINGO1 containing receptor complex. Acts as a negative regulator of central nervous system angiogenesis. Inhibits spreading, migration and sprouting of primary brain microvascular endothelial cells (MVECs). Also induces the retraction of MVECs lamellipodia and filopodia in a ROCK pathway-dependent manner. Mainly function in endothelial cells and vascular smooth muscle cells, is also involved in immune system regulation. Modulator of vascular remodeling, promotes the migration of endothelial cells but inhibits the migration of vascular smooth muscle cells. Regulates endothelial sphingolipid biosynthesis with direct effects on vascular function and blood pressure. Inhibits serine palmitoyltransferase, SPTLC1, the rate-limiting enzyme of the novo sphingolipid biosynthetic pathway, thereby controlling production of endothelial sphingosine-1-phosphate (S1P). Required to promote macrophage homing and functions such as cytokine/chemokine gene expression involved in angiogenesis, arteriogenesis and tissue repair. Mediates ICAM1 induced transendothelial migration of leukocytes such as monocytes and neutrophils and acute inflammation. Necessary for immune responses triggered by nucleic acid sensing TLRs, such as TLR9, is required for proper TLR9 location to endolysosomes. Also involved in immune response to LPS. Plays a role in liver regeneration through the modulation of hepatocytes proliferation. Reduces the anti-apoptotic activity of Bcl-xl and Bcl-2. This is likely consecutive to their change in subcellular location, from the mitochondria to the endoplasmic reticulum, after binding and sequestration. With isoform C, inhibits BACE1 activity and amyloid precursor protein processing. Its function is as follows. Regulates cardiomyocyte apoptosis upon hypoxic conditions. With isoform B, inhibits BACE1 activity and amyloid precursor protein processing. The protein is Reticulon-4 (Rtn4) of Rattus norvegicus (Rat).